We begin with the raw amino-acid sequence, 325 residues long: MKNPKMTVIGGGTGISIILKSLRNEAVDITAVVTVADDGGSSGELRNAMQLAPPGDLRNVLLAMSDMPKFYERVFQYRFNESDGALAGHPLGNLIIAGISEMQGSTYNAIQILTKFFHITGKIYPSSEQALTLHAVFKDGHEVAGESSIAKYPGMIDHVYVTNTYNDQKPQASRKVVEAILESDMIVLGPGSLFTSILPNLVIPEIKEALRQTKAEVVYICNIMTQYGETEQFSDADHVAVLNQHLGRDLIDTVLVNVAKVPQAYMNSNKFDEYLVQVDHDFAGLCRAAKRVISSYFLRLENGGAFHDGNLVVEELMNLVRIVKQ.

Belongs to the gluconeogenesis factor family.

Its subcellular location is the cytoplasm. Functionally, required for morphogenesis under gluconeogenic growth conditions. This Streptococcus pyogenes serotype M1 protein is Putative gluconeogenesis factor.